The chain runs to 76 residues: Probable insulin-like peptide alpha-type 1 (76 aa).

An N-terminal signal peptide occupies residues 1 to 24; it reads MKTYSFFVLFIVFIFFISSSKSHS. Intrachain disulfides connect Cys32/Cys60, Cys44/Cys73, and Cys48/Cys74.

It belongs to the insulin family.

Its subcellular location is the secreted. This chain is Probable insulin-like peptide alpha-type 1 (ins-21), found in Caenorhabditis elegans.